Reading from the N-terminus, the 395-residue chain is S-adenosylmethionine synthase (395 aa).

Histidine 14 contacts ATP. Residue aspartate 16 coordinates Mg(2+). Glutamate 42 serves as a coordination point for K(+). Residues glutamate 55 and glutamine 98 each contribute to the L-methionine site. Positions glutamine 98–lysine 108 are flexible loop. ATP-binding positions include aspartate 174–lysine 176, arginine 240–phenylalanine 241, aspartate 249, arginine 255–lysine 256, alanine 272, and lysine 276. Aspartate 249 contributes to the L-methionine binding site. Lysine 280 contributes to the L-methionine binding site.

The protein belongs to the AdoMet synthase family. Homotetramer; dimer of dimers. The cofactor is Mg(2+). K(+) is required as a cofactor.

It localises to the cytoplasm. The catalysed reaction is L-methionine + ATP + H2O = S-adenosyl-L-methionine + phosphate + diphosphate. The protein operates within amino-acid biosynthesis; S-adenosyl-L-methionine biosynthesis; S-adenosyl-L-methionine from L-methionine: step 1/1. Its function is as follows. Catalyzes the formation of S-adenosylmethionine (AdoMet) from methionine and ATP. The overall synthetic reaction is composed of two sequential steps, AdoMet formation and the subsequent tripolyphosphate hydrolysis which occurs prior to release of AdoMet from the enzyme. This Thermotoga neapolitana (strain ATCC 49049 / DSM 4359 / NBRC 107923 / NS-E) protein is S-adenosylmethionine synthase.